The primary structure comprises 558 residues: Putative polypeptide N-acetylgalactosaminyltransferase 13 (558 aa).

Residues 1-12 lie on the Cytoplasmic side of the membrane; it reads MHAGGKYCGPRH. A helical; Signal-anchor for type II membrane protein membrane pass occupies residues 13-32; it reads CSFYIIAFLICQLFFLVIFI. Residues 33-558 are Lumenal-facing; that stretch reads RNDDASSANE…QFALEMEGQT (526 aa). Residues Asn-48 and Asn-111 are each glycosylated (N-linked (GlcNAc...) asparagine). Disulfide bonds link Cys-97–Cys-335, Cys-326–Cys-412, Cys-445–Cys-460, and Cys-484–Cys-498. The tract at residues 109 to 225 is catalytic subdomain A; sequence EANVSVVISF…EGWLEPLLER (117 aa). Substrate-binding residues include Asp-150 and Arg-186. Asp-209 contacts Mn(2+). A substrate-binding site is contributed by Ser-210. Mn(2+) is bound at residue His-211. A catalytic subdomain B region spans residues 281–343; sequence PYQSPAFAGG…PCSRIGHIFR (63 aa). Trp-312 provides a ligand contact to substrate. His-340 contacts Mn(2+). Substrate-binding residues include Arg-343 and His-346. The 135-residue stretch at 422–556 folds into the Ricin B-type lectin domain; that stretch reads VSPELRMHFD…SFQFALEMEG (135 aa). N-linked (GlcNAc...) asparagine glycosylation occurs at Asn-501. Cysteines 525 and 539 form a disulfide.

Belongs to the glycosyltransferase 2 family. GalNAc-T subfamily. Mn(2+) serves as cofactor. As to expression, during embryonic stages 16-17, very weak expression in the midgut.

It localises to the golgi apparatus membrane. It catalyses the reaction L-seryl-[protein] + UDP-N-acetyl-alpha-D-galactosamine = a 3-O-[N-acetyl-alpha-D-galactosaminyl]-L-seryl-[protein] + UDP + H(+). The catalysed reaction is L-threonyl-[protein] + UDP-N-acetyl-alpha-D-galactosamine = a 3-O-[N-acetyl-alpha-D-galactosaminyl]-L-threonyl-[protein] + UDP + H(+). The protein operates within protein modification; protein glycosylation. Functionally, may catalyze the initial reaction in O-linked oligosaccharide biosynthesis, the transfer of an N-acetyl-D-galactosamine residue to a serine or threonine residue on the protein receptor. In Drosophila melanogaster (Fruit fly), this protein is Putative polypeptide N-acetylgalactosaminyltransferase 13 (pgant13).